A 395-amino-acid polypeptide reads, in one-letter code: Probable alcohol dehydrogenase EutG (395 aa).

NAD(+)-binding positions include Asp57, Gly116–Asp120, Thr156–Thr160, Lys178, and Leu197–Val201. Residues Asp212, His216, His281, and His295 each contribute to the Fe cation site. Residues His295 and Asp354 each coordinate NAD(+).

This sequence belongs to the iron-containing alcohol dehydrogenase family. Fe cation serves as cofactor.

It is found in the bacterial microcompartment. The catalysed reaction is ethanol + NAD(+) = acetaldehyde + NADH + H(+). It participates in amine and polyamine degradation; ethanolamine degradation. May act on the acetaldehyde produced from the degradation of ethanolamine, producing ethanol. Active on acetaldehyde and isobutyraldehyde in vitro. In vitro works equally well with NADH or NADPH. The sequence is that of Probable alcohol dehydrogenase EutG (eutG) from Escherichia coli (strain K12).